We begin with the raw amino-acid sequence, 70 residues long: Cuticle protein 16 isoform b (70 aa).

This Limulus polyphemus (Atlantic horseshoe crab) protein is Cuticle protein 16 isoform b.